The following is a 200-amino-acid chain: MAKGDPKKPKGKMSAYAFFVQTCREEHKKKNPEVPVNFAEFSKKCSERWKTMSGKEKSKFDEMAKADKVRYDREMKDYGPAKGGKKKKDPNAPKRPPSGFFLFCSEFRPKIKSANPGISIGDVAKKLGEMWNNLSDSEKQPYINKAAKLKEKYEKDVADYKSKGKFDGAKGAAKVARKKVEEEDEEDEEEEEEEEEEEDE.

The residue at position 3 (Lys-3) is an N6-acetyllysine. 2 consecutive DNA-binding regions (HMG box) follow at residues 9–79 (PKGK…KDYG) and 93–161 (PKRP…ADYK). Residue Cys-23 is modified to Cysteine sulfonic acid (-SO3H); alternate. Cys-23 and Cys-45 are joined by a disulfide. Lys-30 and Lys-43 each carry N6-acetyllysine. Cys-45 bears the Cysteine sulfonic acid (-SO3H); alternate mark. The tract at residues 71–97 (YDREMKDYGPAKGGKKKKDPNAPKRPP) is disordered. Phosphoserine is present on Ser-98. Residue Cys-104 is modified to Cysteine sulfonic acid (-SO3H). N6-acetyllysine occurs at positions 112 and 139. The tract at residues 163–200 (KGKFDGAKGAAKVARKKVEEEDEEDEEEEEEEEEEEDE) is disordered. A compositionally biased stretch (acidic residues) spans 182–200 (EEDEEDEEEEEEEEEEEDE).

This sequence belongs to the HMGB family. In terms of processing, reduction/oxidation of cysteine residues Cys-23, Cys-45 and Cys-104 and a possible intramolecular disulfide bond involving Cys-23 and Cys-45 give rise to different redox forms with specific functional activities in various cellular compartments: 1- fully reduced HMGB3 (HMGB3C23hC45hC104h), 2- disulfide HMGB3 (HMGB3C23-C45C104h) and 3- sulfonyl HMGB3 (HMGB3C23soC45soC104so).

The protein resides in the nucleus. The protein localises to the chromosome. It is found in the cytoplasm. In terms of biological role, multifunctional protein with various roles in different cellular compartments. May act in a redox sensitive manner. Associates with chromatin and binds DNA with a preference for non-canonical DNA structures such as single-stranded DNA. Can bend DNA and enhance DNA flexibility by looping thus providing a mechanism to promote activities on various gene promoters. Proposed to be involved in the innate immune response to nucleic acids by acting as a cytoplasmic promiscuous immunogenic DNA/RNA sensor. Negatively regulates B-cell and myeloid cell differentiation. In hematopoietic stem cells may regulate the balance between self-renewal and differentiation. Involved in negative regulation of canonical Wnt signaling. The sequence is that of High mobility group protein B3 (HMGB3) from Bos taurus (Bovine).